A 458-amino-acid polypeptide reads, in one-letter code: Chromosomal replication initiator protein DnaA (458 aa).

Residues 1 to 84 (MENIWLEAQT…FHVAEEKPEA (84 aa)) form a domain I, interacts with DnaA modulators region. Residues 80 to 119 (EKPEAAHEAKPEKEAKPAREKERDKDKEKEKDREKEKKEL) are compositionally biased toward basic and acidic residues. Positions 80–120 (EKPEAAHEAKPEKEAKPAREKERDKDKEKEKDREKEKKELV) are disordered. The domain II stretch occupies residues 84-121 (AAHEAKPEKEAKPAREKERDKDKEKEKDREKEKKELVP). Positions 122 to 338 (NLNPKYTFES…GMLIRLEAFA (217 aa)) are domain III, AAA+ region. 4 residues coordinate ATP: Gly-166, Gly-168, Lys-169, and Thr-170. Residues 339–458 (SLTGQEITLS…VEDIRKKLFT (120 aa)) are domain IV, binds dsDNA.

This sequence belongs to the DnaA family. Oligomerizes as a right-handed, spiral filament on DNA at oriC.

It localises to the cytoplasm. Plays an essential role in the initiation and regulation of chromosomal replication. ATP-DnaA binds to the origin of replication (oriC) to initiate formation of the DNA replication initiation complex once per cell cycle. Binds the DnaA box (a 9 base pair repeat at the origin) and separates the double-stranded (ds)DNA. Forms a right-handed helical filament on oriC DNA; dsDNA binds to the exterior of the filament while single-stranded (ss)DNA is stabiized in the filament's interior. The ATP-DnaA-oriC complex binds and stabilizes one strand of the AT-rich DNA unwinding element (DUE), permitting loading of DNA polymerase. After initiation quickly degrades to an ADP-DnaA complex that is not apt for DNA replication. Binds acidic phospholipids. The chain is Chromosomal replication initiator protein DnaA from Citrifermentans bemidjiense (strain ATCC BAA-1014 / DSM 16622 / JCM 12645 / Bem) (Geobacter bemidjiensis).